A 538-amino-acid polypeptide reads, in one-letter code: Phosphoenolpyruvate carboxykinase (ATP) (538 aa).

The substrate site is built by Arg-62, Tyr-203, and Lys-209. ATP is bound by residues Lys-209, His-228, and 244 to 252; that span reads GLSGTGKTT. Mn(2+) is bound by residues Lys-209 and His-228. Asp-265 contributes to the Mn(2+) binding site. Residues Glu-293, Arg-329, 445 to 446, and Thr-451 each bind ATP; that span reads RI. Arg-329 lines the substrate pocket.

This sequence belongs to the phosphoenolpyruvate carboxykinase (ATP) family. Monomer. Mn(2+) serves as cofactor.

The protein localises to the cytoplasm. The enzyme catalyses oxaloacetate + ATP = phosphoenolpyruvate + ADP + CO2. It functions in the pathway carbohydrate biosynthesis; gluconeogenesis. Functionally, involved in the gluconeogenesis. Catalyzes the conversion of oxaloacetate (OAA) to phosphoenolpyruvate (PEP) through direct phosphoryl transfer between the nucleoside triphosphate and OAA. In Haemophilus ducreyi (strain 35000HP / ATCC 700724), this protein is Phosphoenolpyruvate carboxykinase (ATP).